Consider the following 465-residue polypeptide: uncharacterized protein (465 aa).

Positions 13–71 (GPRPGLRLELQAIDLDRDGHGLARWQGWVVVVPGLLPGERAKVQLQQRQKSRWLSRISE) constitute a TRAM domain. [4Fe-4S] cluster is bound by residues C84, C90, C93, and C171. S-adenosyl-L-methionine is bound by residues Q294, Y324, E345, and D391. The active-site Nucleophile is C418.

This sequence belongs to the class I-like SAM-binding methyltransferase superfamily. RNA M5U methyltransferase family.

This is an uncharacterized protein from Parasynechococcus marenigrum (strain WH8102).